Here is a 380-residue protein sequence, read N- to C-terminus: Homoserine O-acetyltransferase (380 aa).

The region spanning 70–366 (NAVLVFHALT…SPHGHDAFLI (297 aa)) is the AB hydrolase-1 domain. The Nucleophile role is filled by serine 186. Substrate is bound at residue arginine 250. Active-site residues include aspartate 333 and histidine 361. Aspartate 362 provides a ligand contact to substrate.

The protein belongs to the AB hydrolase superfamily. MetX family. In terms of assembly, homodimer.

It is found in the cytoplasm. It carries out the reaction L-homoserine + acetyl-CoA = O-acetyl-L-homoserine + CoA. It participates in amino-acid biosynthesis; L-methionine biosynthesis via de novo pathway; O-acetyl-L-homoserine from L-homoserine: step 1/1. Functionally, transfers an acetyl group from acetyl-CoA to L-homoserine, forming acetyl-L-homoserine. In Thermus thermophilus (strain ATCC 27634 / DSM 579 / HB8), this protein is Homoserine O-acetyltransferase.